The chain runs to 379 residues: Origin of replication complex subunit 2 (379 aa).

Positions 1–25 (MALRGGHAAAAAGVSSGSEDDDEEA) are disordered. Residues 8–17 (AAAAAGVSSG) show a composition bias toward low complexity.

The protein belongs to the ORC2 family. Component of the origin recognition complex (ORC) composed of at least ORC1, ORC2, ORC3, ORC4, ORC5 and ORC6. ORC is regulated in a cell-cycle and development dependent manner. It is sequentially assembled at the exit from anaphase of mitosis and disassembled as cells enter S phase.

It is found in the nucleus. In terms of biological role, essential protein. Component of the origin recognition complex (ORC) that binds origins of replication. DNA-binding is ATP-dependent, however specific DNA sequences that define origins of replication have not been identified so far. ORC is required to assemble the pre-replication complex necessary to initiate DNA replication. The sequence is that of Origin of replication complex subunit 2 from Oryza sativa subsp. indica (Rice).